We begin with the raw amino-acid sequence, 491 residues long: Acetyl-coenzyme A carboxylase carboxyl transferase subunit beta, chloroplastic (491 aa).

The disordered stretch occupies residues 26–49 (ARPRPIGNTNGSQDPSINDRDKNG). The span at 32-41 (GNTNGSQDPS) shows a compositional bias: polar residues. One can recognise a CoA carboxyltransferase N-terminal domain in the interval 222–491 (LWVQCDNCYG…PLNHNSQVKR (270 aa)). C226, C229, C245, and C248 together coordinate Zn(2+). The C4-type zinc-finger motif lies at 226–248 (CDNCYGLNYKKIFSSKMNICEQC).

Belongs to the AccD/PCCB family. As to quaternary structure, acetyl-CoA carboxylase is a heterohexamer composed of biotin carboxyl carrier protein, biotin carboxylase and 2 subunits each of ACCase subunit alpha and ACCase plastid-coded subunit beta (accD). It depends on Zn(2+) as a cofactor.

It is found in the plastid. Its subcellular location is the chloroplast stroma. It catalyses the reaction N(6)-carboxybiotinyl-L-lysyl-[protein] + acetyl-CoA = N(6)-biotinyl-L-lysyl-[protein] + malonyl-CoA. Its pathway is lipid metabolism; malonyl-CoA biosynthesis; malonyl-CoA from acetyl-CoA: step 1/1. Functionally, component of the acetyl coenzyme A carboxylase (ACC) complex. Biotin carboxylase (BC) catalyzes the carboxylation of biotin on its carrier protein (BCCP) and then the CO(2) group is transferred by the transcarboxylase to acetyl-CoA to form malonyl-CoA. The protein is Acetyl-coenzyme A carboxylase carboxyl transferase subunit beta, chloroplastic of Ceratophyllum demersum (Rigid hornwort).